Reading from the N-terminus, the 251-residue chain is ATP synthase subunit a 2 (251 aa).

The next 5 helical transmembrane spans lie at 35 to 55 (GQVF…SLLA), 94 to 114 (LPFI…GSLI), 133 to 153 (INTT…AGLS), 198 to 218 (LVVA…LMAL), and 219 to 239 (GLFT…AYIH).

Belongs to the ATPase A chain family. F-type ATPases have 2 components, CF(1) - the catalytic core - and CF(0) - the membrane proton channel. CF(1) has five subunits: alpha(3), beta(3), gamma(1), delta(1), epsilon(1). CF(0) has four main subunits: a, b, b' and c.

The protein resides in the cellular thylakoid membrane. Key component of the proton channel; it plays a direct role in the translocation of protons across the membrane. The polypeptide is ATP synthase subunit a 2 (Crocosphaera subtropica (strain ATCC 51142 / BH68) (Cyanothece sp. (strain ATCC 51142))).